Consider the following 157-residue polypeptide: Small ribosomal subunit protein uS7 (157 aa).

This sequence belongs to the universal ribosomal protein uS7 family. As to quaternary structure, part of the 30S ribosomal subunit. Contacts proteins S9 and S11.

One of the primary rRNA binding proteins, it binds directly to 16S rRNA where it nucleates assembly of the head domain of the 30S subunit. Is located at the subunit interface close to the decoding center, probably blocks exit of the E-site tRNA. The polypeptide is Small ribosomal subunit protein uS7 (Leptospira borgpetersenii serovar Hardjo-bovis (strain JB197)).